We begin with the raw amino-acid sequence, 806 residues long: Acetyl-CoA decarbonylase/synthase complex subunit alpha 1 (806 aa).

Cys-73, Cys-76, Cys-77, Cys-79, Cys-84, and Cys-94 together coordinate [4Fe-4S] cluster. His-117 is a CO binding site. The [Ni-4Fe-4S] cluster site is built by His-250, Cys-278, and Cys-323. 4Fe-4S ferredoxin-type domains follow at residues 406–436 and 445–475; these read SDEQ…IPEA and FSYL…LSVI. Cys-417, Cys-420, Cys-423, Cys-427, Cys-455, Cys-458, Cys-461, and Cys-465 together coordinate [4Fe-4S] cluster. [Ni-4Fe-4S] cluster is bound by residues Cys-523, Cys-552, and Cys-587.

The protein belongs to the Ni-containing carbon monoxide dehydrogenase family. As to quaternary structure, heterotetramer of two alpha and two epsilon subunits. The ACDS complex is made up of alpha, epsilon, beta, gamma and delta subunits with a probable stoichiometry of (alpha(2)epsilon(2))(4)-beta(8)-(gamma(1)delta(1))(8). The cofactor is [4Fe-4S] cluster. It depends on [Ni-4Fe-4S] cluster as a cofactor.

It carries out the reaction CO + 2 oxidized [2Fe-2S]-[ferredoxin] + H2O = 2 reduced [2Fe-2S]-[ferredoxin] + CO2 + 2 H(+). Its pathway is one-carbon metabolism; methanogenesis from acetate. Part of the ACDS complex that catalyzes the reversible cleavage of acetyl-CoA, allowing growth on acetate as sole source of carbon and energy. The alpha-epsilon subcomponent functions as a carbon monoxide dehydrogenase. The chain is Acetyl-CoA decarbonylase/synthase complex subunit alpha 1 from Methanosarcina mazei (strain ATCC BAA-159 / DSM 3647 / Goe1 / Go1 / JCM 11833 / OCM 88) (Methanosarcina frisia).